Reading from the N-terminus, the 186-residue chain is MIRGTMKIGITKMYKEIADLIGLEEYEIVNPYNTKVDCDFLIISKGYKERVKKLNPESEIFEVKSATFMDLIKSLEELKKLGIGKEGKIDKSIEFLKNKEKEIKKLVKDLNVKVNPKTEFIRKVVEDLGLEISDNGILIIPDYLFDGKNIENIIILKTHNYDLGLVERIEDRYLQIIQSIQKYLNK.

This is an uncharacterized protein from Methanocaldococcus jannaschii (strain ATCC 43067 / DSM 2661 / JAL-1 / JCM 10045 / NBRC 100440) (Methanococcus jannaschii).